The sequence spans 217 residues: tRNA (guanine-N(7)-)-methyltransferase (217 aa).

The S-adenosyl-L-methionine site is built by E43, D68, N101, and N123. Substrate is bound at residue K127. The tract at residues K129–R134 is interaction with RNA. Residues D159 and T196–E199 each bind substrate.

Belongs to the class I-like SAM-binding methyltransferase superfamily. TrmB family.

The enzyme catalyses guanosine(46) in tRNA + S-adenosyl-L-methionine = N(7)-methylguanosine(46) in tRNA + S-adenosyl-L-homocysteine. It functions in the pathway tRNA modification; N(7)-methylguanine-tRNA biosynthesis. Functionally, catalyzes the formation of N(7)-methylguanine at position 46 (m7G46) in tRNA. This chain is tRNA (guanine-N(7)-)-methyltransferase, found in Clostridium botulinum (strain Okra / Type B1).